The chain runs to 732 residues: 1,4-alpha-glucan branching enzyme GlgB (732 aa).

Asp415 serves as the catalytic Nucleophile. The active-site Proton donor is the Glu468.

This sequence belongs to the glycosyl hydrolase 13 family. GlgB subfamily. As to quaternary structure, monomer.

The catalysed reaction is Transfers a segment of a (1-&gt;4)-alpha-D-glucan chain to a primary hydroxy group in a similar glucan chain.. The protein operates within glycan biosynthesis; glycogen biosynthesis. Functionally, catalyzes the formation of the alpha-1,6-glucosidic linkages in glycogen by scission of a 1,4-alpha-linked oligosaccharide from growing alpha-1,4-glucan chains and the subsequent attachment of the oligosaccharide to the alpha-1,6 position. The protein is 1,4-alpha-glucan branching enzyme GlgB of Nitrosomonas eutropha (strain DSM 101675 / C91 / Nm57).